Here is a 261-residue protein sequence, read N- to C-terminus: tRNA pseudouridine synthase A (261 aa).

The active-site Nucleophile is D51. Y109 contacts substrate.

The protein belongs to the tRNA pseudouridine synthase TruA family. In terms of assembly, homodimer.

The catalysed reaction is uridine(38/39/40) in tRNA = pseudouridine(38/39/40) in tRNA. Formation of pseudouridine at positions 38, 39 and 40 in the anticodon stem and loop of transfer RNAs. The polypeptide is tRNA pseudouridine synthase A (Photobacterium profundum (strain SS9)).